A 900-amino-acid polypeptide reads, in one-letter code: DNA mismatch repair protein MutS (900 aa).

637 to 644 (GPNMAGKS) is an ATP binding site.

This sequence belongs to the DNA mismatch repair MutS family.

Functionally, this protein is involved in the repair of mismatches in DNA. It is possible that it carries out the mismatch recognition step. This protein has a weak ATPase activity. The chain is DNA mismatch repair protein MutS from Methanosarcina acetivorans (strain ATCC 35395 / DSM 2834 / JCM 12185 / C2A).